Reading from the N-terminus, the 239-residue chain is 7-cyano-7-deazaguanine synthase (239 aa).

An ATP-binding site is contributed by 13 to 23 (FSGGQDSTTCL). Cys-201, Cys-216, Cys-219, and Cys-222 together coordinate Zn(2+).

Belongs to the QueC family. It depends on Zn(2+) as a cofactor.

The catalysed reaction is 7-carboxy-7-deazaguanine + NH4(+) + ATP = 7-cyano-7-deazaguanine + ADP + phosphate + H2O + H(+). The protein operates within purine metabolism; 7-cyano-7-deazaguanine biosynthesis. Catalyzes the ATP-dependent conversion of 7-carboxy-7-deazaguanine (CDG) to 7-cyano-7-deazaguanine (preQ(0)). This chain is 7-cyano-7-deazaguanine synthase, found in Bradyrhizobium sp. (strain BTAi1 / ATCC BAA-1182).